The chain runs to 261 residues: Cytochrome c oxidase subunit 3 (261 aa).

Over 1 to 15 (MAHQAHAYHMVDPSP) the chain is Mitochondrial matrix. The helical transmembrane segment at 16–34 (WPLTGAVAALLLTSGLAVW) threads the bilayer. The Mitochondrial intermembrane segment spans residues 35 to 40 (FHFKSL). A helical membrane pass occupies residues 41–66 (TLLAMGLLLMILTMIQWWRDIIREGT). Residues 67 to 72 (FQGHHT) lie on the Mitochondrial matrix side of the membrane. A helical transmembrane segment spans residues 73-105 (PPVQKGLRYGMILFITSEVFFFLGFFWAFYHSS). Residues 106-128 (LAPTPELGGIWPPTGITPLDPFE) are Mitochondrial intermembrane-facing. A helical membrane pass occupies residues 129–152 (VPLLNTAVLLASGVTVTWTHHSLM). At 153–155 (EGK) the chain is on the mitochondrial matrix side. The helical transmembrane segment at 156-183 (RTEATQALTLTILLGLYFTALQAMEYYE) threads the bilayer. Residues 184-190 (APFTIAD) are Mitochondrial intermembrane-facing. A helical transmembrane segment spans residues 191–223 (GVYGTTFFVATGFHGLHVIIGSTFLAGCLLRQI). The Mitochondrial matrix segment spans residues 224 to 232 (LYHFTSSHH). A helical transmembrane segment spans residues 233-256 (FGFEAAAWYWHFVDVVWLFLYVSI). The Mitochondrial intermembrane portion of the chain corresponds to 257–261 (YWWGS).

The protein belongs to the cytochrome c oxidase subunit 3 family. In terms of assembly, component of the cytochrome c oxidase (complex IV, CIV), a multisubunit enzyme composed of 14 subunits. The complex is composed of a catalytic core of 3 subunits MT-CO1, MT-CO2 and MT-CO3, encoded in the mitochondrial DNA, and 11 supernumerary subunits COX4I, COX5A, COX5B, COX6A, COX6B, COX6C, COX7A, COX7B, COX7C, COX8 and NDUFA4, which are encoded in the nuclear genome. The complex exists as a monomer or a dimer and forms supercomplexes (SCs) in the inner mitochondrial membrane with NADH-ubiquinone oxidoreductase (complex I, CI) and ubiquinol-cytochrome c oxidoreductase (cytochrome b-c1 complex, complex III, CIII), resulting in different assemblies (supercomplex SCI(1)III(2)IV(1) and megacomplex MCI(2)III(2)IV(2)).

The protein localises to the mitochondrion inner membrane. The catalysed reaction is 4 Fe(II)-[cytochrome c] + O2 + 8 H(+)(in) = 4 Fe(III)-[cytochrome c] + 2 H2O + 4 H(+)(out). In terms of biological role, component of the cytochrome c oxidase, the last enzyme in the mitochondrial electron transport chain which drives oxidative phosphorylation. The respiratory chain contains 3 multisubunit complexes succinate dehydrogenase (complex II, CII), ubiquinol-cytochrome c oxidoreductase (cytochrome b-c1 complex, complex III, CIII) and cytochrome c oxidase (complex IV, CIV), that cooperate to transfer electrons derived from NADH and succinate to molecular oxygen, creating an electrochemical gradient over the inner membrane that drives transmembrane transport and the ATP synthase. Cytochrome c oxidase is the component of the respiratory chain that catalyzes the reduction of oxygen to water. Electrons originating from reduced cytochrome c in the intermembrane space (IMS) are transferred via the dinuclear copper A center (CU(A)) of subunit 2 and heme A of subunit 1 to the active site in subunit 1, a binuclear center (BNC) formed by heme A3 and copper B (CU(B)). The BNC reduces molecular oxygen to 2 water molecules using 4 electrons from cytochrome c in the IMS and 4 protons from the mitochondrial matrix. The sequence is that of Cytochrome c oxidase subunit 3 (mt-co3) from Polypterus ornatipinnis (Ornate bichir).